Consider the following 815-residue polypeptide: G-type lectin S-receptor-like serine/threonine-protein kinase SD1-1 (815 aa).

The signal sequence occupies residues 1-22 (MREIHSLFSLSLFLISSSLSVA). Residues 23-438 (LDYNVITPKE…FAKIEFKGRE (416 aa)) are Extracellular-facing. The region spanning 25 to 152 (YNVITPKEFL…EEAVLWQSFD (128 aa)) is the Bulb-type lectin domain. 3 N-linked (GlcNAc...) asparagine glycosylation sites follow: asparagine 93, asparagine 249, and asparagine 265. The EGF-like domain maps to 288-326 (PEDECDYYSICGAYAVCGINSKNTPSCSCLQGFKPKSGR). 2 cysteine pairs are disulfide-bonded: cysteine 292/cysteine 304 and cysteine 298/cysteine 314. Residues asparagine 329 and asparagine 385 are each glycosylated (N-linked (GlcNAc...) asparagine). In terms of domain architecture, PAN spans 345 to 428 (CEKKDAFVKF…FGQDVYIRMG (84 aa)). Cystine bridges form between cysteine 378–cysteine 403 and cysteine 382–cysteine 388. A helical membrane pass occupies residues 439–459 (VVGMVVGSVVAIAVVLVVVFA). Residues 460-815 (CFRKKIMKRY…EVSITMLQGR (356 aa)) lie on the Cytoplasmic side of the membrane. The Protein kinase domain maps to 500–783 (FSYVNFLGRG…SDSSLPHPTQ (284 aa)). Residues 506–514 (LGRGGFGPV) and lysine 528 contribute to the ATP site. The residue at position 534 (serine 534) is a Phosphoserine. Positions 589-606 (RRSTELDWKKRMNIINGV) are caM-binding. Aspartate 625 acts as the Proton acceptor in catalysis. Serine 642 is subject to Phosphoserine. At threonine 659 the chain carries Phosphothreonine. A phosphoserine mark is found at serine 797 and serine 803. Threonine 810 carries the post-translational modification Phosphothreonine.

Belongs to the protein kinase superfamily. Ser/Thr protein kinase family. In terms of assembly, interacts with PUB9, PUB13 and PUB14.

Its subcellular location is the cell membrane. The catalysed reaction is L-seryl-[protein] + ATP = O-phospho-L-seryl-[protein] + ADP + H(+). The enzyme catalyses L-threonyl-[protein] + ATP = O-phospho-L-threonyl-[protein] + ADP + H(+). This Arabidopsis thaliana (Mouse-ear cress) protein is G-type lectin S-receptor-like serine/threonine-protein kinase SD1-1 (SD11).